A 238-amino-acid polypeptide reads, in one-letter code: ATP synthase subunit a (238 aa).

The next 5 membrane-spanning stretches (helical) occupy residues 18–38, 76–96, 117–137, 173–193, and 208–230; these read GTTMITTTIAMAIVVIITVIG, FIVLAYALLFYVFVANMMGIP, VLTLTMAVFIVVLTHIYGIMV, LFGNIYAKEILMLLLVSLGTT, and WQAFSIFIGSLQAYIFAMLAMVY.

The protein belongs to the ATPase A chain family. As to quaternary structure, F-type ATPases have 2 components, CF(1) - the catalytic core - and CF(0) - the membrane proton channel. CF(1) has five subunits: alpha(3), beta(3), gamma(1), delta(1), epsilon(1). CF(0) has three main subunits: a(1), b(2) and c(9-12). The alpha and beta chains form an alternating ring which encloses part of the gamma chain. CF(1) is attached to CF(0) by a central stalk formed by the gamma and epsilon chains, while a peripheral stalk is formed by the delta and b chains.

It localises to the cell membrane. Key component of the proton channel; it plays a direct role in the translocation of protons across the membrane. This chain is ATP synthase subunit a, found in Shouchella clausii (strain KSM-K16) (Alkalihalobacillus clausii).